The primary structure comprises 56 residues: Large ribosomal subunit protein bL33 (56 aa).

The protein belongs to the bacterial ribosomal protein bL33 family.

The protein is Large ribosomal subunit protein bL33 of Anaplasma phagocytophilum (strain HZ).